The following is a 251-amino-acid chain: MESGKMAPPKNAPRDALVMAQILKDMGITEYEPRVINQMLEFAFRYVTTILDDAKIYSSHAKKPNVDADDVRLAIQCRADQSFTSPPPRDFLLDIARQKNQTPLPLIKPYAGPRLPPDRYCLTAPNYRLKSLIKKGPNQGRLVPRLSVGAVSSKPTTPTIATPQTVSVPNKVATPMSVTSQRFTVQIPPSQSTPVKPVPATTAVQNVLINPSMIGPKNILITTNMVSSQNTANEANPLKRKHEDDDDNDIM.

Residue Met1 is modified to N-acetylmethionine. Phosphoserine is present on Ser147. Phosphothreonine occurs at positions 159 and 174. Ser177 carries the phosphoserine modification. Positions 229–251 (QNTANEANPLKRKHEDDDDNDIM) are disordered.

This sequence belongs to the TAF9 family. As to quaternary structure, binds TAF5 and TAF6. Component of TFIID and the TATA-binding protein-free TAF complex (TFTC). TFIID is composed of TATA binding protein (TBP) and a number of TBP-associated factors (TAFs). Binds N-terminal domain of p53/TP53 which is essential for transcription.

Its subcellular location is the nucleus. Its function is as follows. Essential for cell viability. TAF9 and TAF9B are involved in transcriptional activation as well as repression of distinct but overlapping sets of genes. May have a role in gene regulation associated with apoptosis. TAFs are components of the transcription factor IID (TFIID) complex, the TBP-free TAFII complex (TFTC), the PCAF histone acetylase complex and the STAGA transcription coactivator-HAT complex. TFIID or TFTC are essential for the regulation of RNA polymerase II-mediated transcription. The sequence is that of Transcription initiation factor TFIID subunit 9B (TAF9B) from Homo sapiens (Human).